The following is a 367-amino-acid chain: Ribosomal RNA large subunit methyltransferase M (367 aa).

S-adenosyl-L-methionine is bound by residues Ser189, 222 to 225 (CPGG), Asp241, Asp261, and Asp278. Lys307 acts as the Proton acceptor in catalysis.

The protein belongs to the class I-like SAM-binding methyltransferase superfamily. RNA methyltransferase RlmE family. RlmM subfamily. Monomer.

The protein resides in the cytoplasm. It carries out the reaction cytidine(2498) in 23S rRNA + S-adenosyl-L-methionine = 2'-O-methylcytidine(2498) in 23S rRNA + S-adenosyl-L-homocysteine + H(+). In terms of biological role, catalyzes the 2'-O-methylation at nucleotide C2498 in 23S rRNA. The protein is Ribosomal RNA large subunit methyltransferase M of Shewanella denitrificans (strain OS217 / ATCC BAA-1090 / DSM 15013).